A 201-amino-acid polypeptide reads, in one-letter code: Ras-related protein Rab-9B (201 aa).

GTP contacts are provided by Val18, Gly19, Lys20, Ser21, Ser22, Asp33, Ser34, Ala36, His38, and Thr39. Mg(2+) is bound at residue Ser21. A Switch 1 motif is present at residues 31 to 42 (KFDSQAFHTIGV). Ser34 carries the phosphoserine modification. Mg(2+) is bound by residues Thr39 and Asp62. A Switch 2 motif is present at residues 64-78 (AGQERFKSLRTPFYR). Residues Gly65, Asn124, Lys125, Ala155, and Lys156 each coordinate GTP. Residues Cys200 and Cys201 are each lipidated (S-geranylgeranyl cysteine).

It belongs to the small GTPase superfamily. Rab family. Interacts (GTP-bound form) with SGSM1; the GDP-bound form has much lower affinity for SGSM1. The GTP-bound form but not the GDP-bound form interacts with HPS4 and the BLOC-3 complex (heterodimer of HPS1 and HPS4) but does not interact with HPS1 alone. Interacts (GTP-bound form) with NDE1. Mg(2+) is required as a cofactor. Ubiquitous.

It localises to the cell membrane. The protein resides in the cytoplasmic vesicle. Its subcellular location is the phagosome. The protein localises to the phagosome membrane. The enzyme catalyses GTP + H2O = GDP + phosphate + H(+). Regulated by guanine nucleotide exchange factors (GEFs) which promote the exchange of bound GDP for free GTP. Regulated by GTPase activating proteins (GAPs) which increase the GTP hydrolysis activity. Inhibited by GDP dissociation inhibitors (GDIs). Its function is as follows. The small GTPases Rab are key regulators of intracellular membrane trafficking, from the formation of transport vesicles to their fusion with membranes. Rabs cycle between an inactive GDP-bound form and an active GTP-bound form that is able to recruit to membranes different sets of downstream effectors directly responsible for vesicle formation, movement, tethering and fusion. RAB9B is involved in the transport of proteins between the endosomes and the trans Golgi network. May use NDE1/NDEL1 as an effector to interact with the dynein motor complex in order to control retrograde trafficking of RAB9-associated late endosomes to the TGN. This Homo sapiens (Human) protein is Ras-related protein Rab-9B.